A 422-amino-acid chain; its full sequence is Dihydroorotase (422 aa).

Zn(2+) contacts are provided by H59 and H61. Substrate is bound by residues 61–63 (HFR) and N93. Zn(2+) is bound by residues D150, H177, and H230. N276 is a binding site for substrate. D303 contributes to the Zn(2+) binding site. Residue D303 is part of the active site. H307 lines the substrate pocket.

This sequence belongs to the metallo-dependent hydrolases superfamily. DHOase family. Class I DHOase subfamily. It depends on Zn(2+) as a cofactor.

The enzyme catalyses (S)-dihydroorotate + H2O = N-carbamoyl-L-aspartate + H(+). The protein operates within pyrimidine metabolism; UMP biosynthesis via de novo pathway; (S)-dihydroorotate from bicarbonate: step 3/3. Functionally, catalyzes the reversible cyclization of carbamoyl aspartate to dihydroorotate. This Streptococcus pyogenes serotype M1 protein is Dihydroorotase.